A 368-amino-acid polypeptide reads, in one-letter code: Peptide chain release factor 2 (368 aa).

The residue at position 249 (glutamine 249) is an N5-methylglutamine.

Belongs to the prokaryotic/mitochondrial release factor family. In terms of processing, methylated by PrmC. Methylation increases the termination efficiency of RF2.

The protein localises to the cytoplasm. Functionally, peptide chain release factor 2 directs the termination of translation in response to the peptide chain termination codons UGA and UAA. The polypeptide is Peptide chain release factor 2 (Rhodococcus erythropolis (strain PR4 / NBRC 100887)).